A 225-amino-acid chain; its full sequence is Ribonuclease 3 (225 aa).

One can recognise an RNase III domain in the interval 7–129 (LPRLGRILGY…IIGAIYLDAD (123 aa)). Residue Glu-42 participates in Mg(2+) binding. Residue Asp-46 is part of the active site. 2 residues coordinate Mg(2+): Asp-115 and Glu-118. Glu-118 is an active-site residue. A DRBM domain is found at 155-225 (DPKTLLQEHL…AAEVLERIKK (71 aa)).

The protein belongs to the ribonuclease III family. As to quaternary structure, homodimer. The cofactor is Mg(2+).

Its subcellular location is the cytoplasm. The catalysed reaction is Endonucleolytic cleavage to 5'-phosphomonoester.. Functionally, digests double-stranded RNA. Involved in the processing of primary rRNA transcript to yield the immediate precursors to the large and small rRNAs (23S and 16S). Processes some mRNAs, and tRNAs when they are encoded in the rRNA operon. Processes pre-crRNA and tracrRNA of type II CRISPR loci if present in the organism. The sequence is that of Ribonuclease 3 from Shewanella loihica (strain ATCC BAA-1088 / PV-4).